Here is a 249-residue protein sequence, read N- to C-terminus: Acidic leucine-rich nuclear phosphoprotein 32 family member A (249 aa).

Residue T15 is modified to Phosphothreonine. Residue S17 is modified to Phosphoserine. LRR repeat units lie at residues 18 to 38 (DVKE…EGLT), 43 to 64 (ELEF…PKLN), 65 to 87 (KLKK…AEKC), and 89 to 110 (NLTH…EPLK). One can recognise an LRRCT domain in the interval 123-161 (CEVTNLNDYRENVFKLLPQLTYLDGYDRDDKEAPDSDAE). Over residues 147–156 (GYDRDDKEAP) the composition is skewed to basic and acidic residues. A disordered region spans residues 147–249 (GYDRDDKEAP…EPEDEGEDDD (103 aa)). Residues 150–174 (RDDKEAPDSDAEGYVEGLDDEEEDE) form a necessary for tumor-suppressive function region. The span at 157 to 230 (DSDAEGYVEG…DEEDEEELGE (74 aa)) shows a compositional bias: acidic residues. S158 and S204 each carry phosphoserine; by CK2. Residues 165–249 (EGLDDEEEDE…EPEDEGEDDD (85 aa)) form an interaction with E4F1 region.

Belongs to the ANP32 family. As to quaternary structure, component of the SET complex, composed of at least ANP32A, APEX1, HMGB2, NME1, SET and TREX1. Directly interacts with SET. Interacts with ATXN1/SCA1. Interacts with MAP1B. Interacts with ELAVL1. Part of the INHAT (inhibitor of histone acetyltransferases) complex. Interacts with E4F1. (Microbial infection) Interacts (via C-terminus) with influenza virus A protein PB2; this interaction promotes viral replication. In terms of assembly, (Microbial infection) Interacts (via C-terminus) with influenza virus B protein PB2; this interaction promotes viral replication. As to quaternary structure, (Microbial infection) Interacts (via C-terminus) with influenza virus C protein PB2; this interaction promotes viral replication by bridging viral replicase dimers together. Post-translationally, phosphorylated on serine residues, at least in part by casein kinase 2/CK2. The N-terminus is blocked. In terms of processing, some glutamate residues are glycylated by TTLL8. This modification occurs exclusively on glutamate residues and results in a glycine chain on the gamma-carboxyl group. Expressed in all tissues tested. Highly expressed in kidney and skeletal muscle, moderate levels of expression in brain, placenta and pancreas, and weakly expressed in lung. Found in all regions of the brain examined (amygdala, caudate nucleus, corpus callosum, hippocampus and thalamus), with highest levels in amygdala.

It is found in the nucleus. Its subcellular location is the cytoplasm. It localises to the endoplasmic reticulum. In terms of biological role, multifunctional protein that is involved in the regulation of many processes including tumor suppression, apoptosis, cell cycle progression or transcription. Promotes apoptosis by favouring the activation of caspase-9/CASP9 and allowing apoptosome formation. In addition, plays a role in the modulation of histone acetylation and transcription as part of the INHAT (inhibitor of histone acetyltransferases) complex. Inhibits the histone-acetyltranferase activity of EP300/CREBBP (CREB-binding protein) and EP300/CREBBP-associated factor by histone masking. Preferentially binds to unmodified histone H3 and sterically inhibiting its acetylation and phosphorylation leading to cell growth inhibition. Participates in other biochemical processes such as regulation of mRNA nuclear-to-cytoplasmic translocation and stability by its association with ELAVL1 (Hu-antigen R). Plays a role in E4F1-mediated transcriptional repression as well as inhibition of protein phosphatase 2A. (Microbial infection) Plays an essential role in influenza A, B and C viral genome replication. Mechanistically, mediates the assembly of the viral replicase asymmetric dimers composed of PB1, PB2 and PA via its N-terminal region. Also plays an essential role in foamy virus mRNA export from the nucleus. This Homo sapiens (Human) protein is Acidic leucine-rich nuclear phosphoprotein 32 family member A (ANP32A).